We begin with the raw amino-acid sequence, 529 residues long: Type I restriction enzyme StySJI methylase subunit (529 aa).

Residues 148–153, 178–180, and E216 contribute to the S-adenosyl-L-methionine site; these read QYFTPR and TAG. The tract at residues 405-444 is disordered; the sequence is YGEDPHGLSPREEGEWSFNAEESEVADSEENKNTDQHQAT. Positions 407-418 are enriched in basic and acidic residues; sequence EDPHGLSPREEG.

Belongs to the N(4)/N(6)-methyltransferase family. As to quaternary structure, the type I restriction/modification system is composed of three polypeptides R, M and S; the restriction enzyme has stoichiometry R(2)M(2)S(1) while the methyltransferase is M(2)S(1).

It carries out the reaction a 2'-deoxyadenosine in DNA + S-adenosyl-L-methionine = an N(6)-methyl-2'-deoxyadenosine in DNA + S-adenosyl-L-homocysteine + H(+). The subtype gamma methyltransferase (M) subunit of a type I restriction enzyme. The M and S subunits together form a methyltransferase (MTase) that methylates two adenine residues of the sequence 5'-GAGN(6)GTRC-3'. In the presence of the R subunit the complex can also act as an endonuclease, binding to the same target sequence but cutting the DNA some distance from this site. Whether the DNA is cut or modified depends on the methylation state of the target sequence. When the target site is unmodified, the DNA is cut. When the target site is hemimethylated, the complex acts as a maintenance MTase modifying the DNA so that both strands become methylated. After locating a non-methylated recognition site, the enzyme complex serves as a molecular motor that translocates DNA in an ATP-dependent manner until a collision occurs that triggers cleavage. The polypeptide is Type I restriction enzyme StySJI methylase subunit (Salmonella typhimurium (strain LT2 / SGSC1412 / ATCC 700720)).